Reading from the N-terminus, the 1174-residue chain is MCPPTIWEKGGQVGARWSLRAPEVSAMAEDGSEEIMFIWCEDCSQYHDSECPELGPVVMVKDSFVLSRARSSLPSNLEIRRLDDGAEGVFAVTQLVKRTQFGPFESRRVAKWEKESAFPLKVFQKDGHPVCFDTSNEDDCNWMMLVRPALEPGHQNLTAYQHGSDVYFTTSKDIPAGTELRVWYAAFYAKKMDKPMLKQACSSVQAAGTPEPSVSVEPERGQWVCKVCSNTFLELQLLNEHLLGHLEQAKSLPAGGQQHEAASEKEPDAPRMEPPTAAESKSIQSVMVTKEPKKKPRRGRKPKASKVEQPLVIIKDKEPSEHVAEIITEIPPDEPVSATPDERIMELVLGKLAAPTNEASSVPKFPHHPSSTIALKRGLVLSSRHGVRRKLVRQLGEHKRIHQCGTCSKVFQNSSNLSRHVRSHGECAHGDKLFKCEECSKLFSRKESLKQHVSYKHSRNEVDGEYRYRCGSCGKTFRMESALEFHNCRTDDKTFQCEMCFRFFSTNSNLSKHKKKHGDKKFACEVCSKMFYRKDVMLDHQRRHLDGVRRVKREDLEASGESLVRYKKEPSGCPVCGKVFSCRSNMNKHLLTHGDKKYTCEICGRKFFRVDVLRDHIHVHFKDIALMDDHQREEFIGKIGISSEENDDNSDESADSEPHKYSCKRCQLTFGRGKEYLKHIMEVHKEKGHGCSICHRRFALKATYHAHMVIHRENLPDPNVQKYIHPCEICGRIFNSIGNLERHKLIHTGVKSHACEQCGKSFARKDMLKEHMRVHDNIREYLCAECGKGMKTKHALRHHMKLHKGIKEYECKECHRKFAQKVNMLKHYKRHTGIKDFMCELCGKTFSERNTMETHKLIHTVGKQWTCSVCDKKYVTEYMLQKHVQLTHDKVEAQSCQLCGTKVSTRASMSRHMRRKHPEVLAVRIDDLDHLPETTTIDASSIGIVQPALGLEQEELAEGKHGKAAKRSHKRKQKPEEEAGAPVPEDTTFSEYPEKEPEFTGSVGDETNSAVQSIQQVVVTLGDPNVTAPSSSVGLTNITVTPITTAAGTQFTNLQPVAVGHLTNPDRQLQLDNSILTVTFDTVSGSAMLHNRQNDVQIHPQPEATNPQSVAHFINLTTLVNSITPLGNQLSEQHPLTWRAVPQTDVLQPPQAPAAPQQAVQPQVQNEQQQMYSY.

The region spanning 75–185 (SNLEIRRLDD…AGTELRVWYA (111 aa)) is the SET domain. The tract at residues 252–307 (LPAGGQQHEAASEKEPDAPRMEPPTAAESKSIQSVMVTKEPKKKPRRGRKPKASKV) is disordered. Residues 261-271 (AASEKEPDAPR) are compositionally biased toward basic and acidic residues. The span at 292 to 304 (PKKKPRRGRKPKA) shows a compositional bias: basic residues. 2 C2H2-type zinc fingers span residues 402-424 (HQCG…VRSH) and 434-457 (FKCE…SYKH). Residues 468-486 (YRCGSCGKTFRMESALEFH) form a C2H2-type 3; degenerate zinc finger. 2 C2H2-type zinc fingers span residues 495 to 517 (FQCE…KKKH) and 522 to 544 (FACE…QRRH). Lys-552 participates in a covalent cross-link: Glycyl lysine isopeptide (Lys-Gly) (interchain with G-Cter in SUMO2). 2 C2H2-type zinc fingers span residues 571–593 (SGCP…LLTH) and 598–620 (YTCE…IHVH). The segment at 639–658 (IGISSEENDDNSDESADSEP) is disordered. Positions 644–655 (EENDDNSDESAD) are enriched in acidic residues. 8 consecutive C2H2-type zinc fingers follow at residues 661–684 (YSCK…MEVH), 689–711 (HGCS…MVIH), 725–747 (HPCE…KLIH), 753–775 (HACE…MRVH), 781–803 (YLCA…MKLH), 809–831 (YECK…YKRH), 837–859 (FMCE…KLIH), and 865–888 (WTCS…QLTH). Disordered stretches follow at residues 957-1007 (AEGK…GDET) and 1147-1174 (LQPP…MYSY). Residues 962–973 (GKAAKRSHKRKQ) show a composition bias toward basic residues. Low complexity predominate over residues 1154–1174 (AAPQQAVQPQVQNEQQQMYSY).

As to expression, expressed in embryonic stem cells (ESCs) (at protein level).

Its subcellular location is the nucleus. In terms of biological role, sequence-specific DNA-binding transcriptional regulator. Plays a role as a molecular node in a transcriptional network regulating embryonic development and cell fate decision. Stimulates the expression of upstream key transcriptional activators and repressors of the Wnt/beta-catenin and MAPK/ERK pathways, respectively, that are essential for naive pluripotency and self-renewal maintenance of embryonic stem cells (ESCs). Specifically promotes SPRY1 and RSPO1 transcription activation through recognition and direct binding of a specific DNA sequence in their promoter regions. Also plays a role in induced pluripotent stem cells (iPSCs) reprogramming. Involved in early embryo development. The sequence is that of PR domain zinc finger protein 15 from Mus musculus (Mouse).